The sequence spans 185 residues: MAVMPDKWIREKAENFGMIEPFVNHKSSKGVISFGLSSYGYDARVDNKFKIFTNVNSAIVDPKNFSENSFIDKETDVCIIPPNSFVLASTVEYFRIPRNVLVICVGKSTYARCGIIVNVTPLEPGWEGHVTLEFSNTTPLPAKIYANEGACQFVFLSGESECEKSYDDMKGKYMNQHGITLPLVK.

DCTP is bound by residues 107-112 (KSTYAR), 131-133 (TLE), Gln152, Tyr166, and Gln176. Glu133 functions as the Proton donor/acceptor in the catalytic mechanism.

The protein belongs to the dCTP deaminase family. As to quaternary structure, homotrimer.

The catalysed reaction is dCTP + H2O + H(+) = dUTP + NH4(+). Its pathway is pyrimidine metabolism; dUMP biosynthesis; dUMP from dCTP (dUTP route): step 1/2. Functionally, catalyzes the deamination of dCTP to dUTP. The sequence is that of dCTP deaminase from Wolbachia pipientis wMel.